The following is a 172-amino-acid chain: MILGDRDLKYYLEKKWILVDPLTEDSVRENGIDMRVGGEIARFKNVDRPFEEGMNPDDFFVRERGNEFVIWPNEHVLMVTEEYLRLPQDIMAFVNMRSSFARLGLLVPPTIVDAGFEGQLTIEVMGSGFPVKIRRGTRFLHLIFAKTLTPVENPYKGKYQGQRGVTIPKFTK.

DCTP-binding positions include 97–102 and aspartate 113; that span reads RSSFAR. The active-site Proton donor/acceptor is glutamate 123. The dCTP site is built by tyrosine 155 and glutamine 162.

Belongs to the dCTP deaminase family. Homotrimer.

The enzyme catalyses dCTP + H2O + H(+) = dUTP + NH4(+). It functions in the pathway pyrimidine metabolism; dUMP biosynthesis; dUMP from dCTP (dUTP route): step 1/2. Its function is as follows. Catalyzes the deamination of dCTP to dUTP. The polypeptide is dCTP deaminase (Metallosphaera sedula (strain ATCC 51363 / DSM 5348 / JCM 9185 / NBRC 15509 / TH2)).